A 235-amino-acid polypeptide reads, in one-letter code: MPKISKRLASLAGKIEDRAYAPLEAIALVKDNANAKFDETMEAHVRLGIDPKYTDQQLRTTVALPNGTGQSVRIAVVTRGEKVAEAKAAGAELAGEEDLVESISKGEMDFDLLIATPDMMPKVAKLGRVLGPRGLMPNPKAGTVTTDLEAAIKEFKAGKLEFRADRTGIVHVRFGKASFSADALLQNLKTLQETIDRNKPSGAKGRYWKSLYVTSTMGPSVEVDFSALQDIEQGS.

This sequence belongs to the universal ribosomal protein uL1 family. In terms of assembly, part of the 50S ribosomal subunit.

Binds directly to 23S rRNA. The L1 stalk is quite mobile in the ribosome, and is involved in E site tRNA release. In terms of biological role, protein L1 is also a translational repressor protein, it controls the translation of the L11 operon by binding to its mRNA. This is Large ribosomal subunit protein uL1 from Synechococcus sp. (strain CC9605).